A 42-amino-acid polypeptide reads, in one-letter code: Cytochrome b559 subunit beta (42 aa).

The chain crosses the membrane as a helical span at residues 17-33 (WLAIHGLAVPTVFFLGA). His21 lines the heme pocket.

Belongs to the PsbE/PsbF family. As to quaternary structure, heterodimer of an alpha subunit and a beta subunit. PSII is composed of 1 copy each of membrane proteins PsbA, PsbB, PsbC, PsbD, PsbE, PsbF, PsbH, PsbI, PsbJ, PsbK, PsbL, PsbM, PsbT, PsbX, PsbY, PsbZ, Psb30/Ycf12, at least 3 peripheral proteins of the oxygen-evolving complex and a large number of cofactors. It forms dimeric complexes. Requires heme b as cofactor.

It localises to the plastid. Its subcellular location is the chloroplast thylakoid membrane. Functionally, this b-type cytochrome is tightly associated with the reaction center of photosystem II (PSII). PSII is a light-driven water:plastoquinone oxidoreductase that uses light energy to abstract electrons from H(2)O, generating O(2) and a proton gradient subsequently used for ATP formation. It consists of a core antenna complex that captures photons, and an electron transfer chain that converts photonic excitation into a charge separation. In Guillardia theta (Cryptophyte), this protein is Cytochrome b559 subunit beta.